We begin with the raw amino-acid sequence, 498 residues long: ATP synthase subunit beta, chloroplastic (498 aa).

An ATP-binding site is contributed by 172–179; the sequence is GGAGVGKT.

This sequence belongs to the ATPase alpha/beta chains family. In terms of assembly, F-type ATPases have 2 components, CF(1) - the catalytic core - and CF(0) - the membrane proton channel. CF(1) has five subunits: alpha(3), beta(3), gamma(1), delta(1), epsilon(1). CF(0) has four main subunits: a(1), b(1), b'(1) and c(9-12).

Its subcellular location is the plastid. It localises to the chloroplast thylakoid membrane. It carries out the reaction ATP + H2O + 4 H(+)(in) = ADP + phosphate + 5 H(+)(out). Functionally, produces ATP from ADP in the presence of a proton gradient across the membrane. The catalytic sites are hosted primarily by the beta subunits. The polypeptide is ATP synthase subunit beta, chloroplastic (Aristolochia macrophylla (Dutchman's pipe vine)).